The primary structure comprises 563 residues: CTP synthase (563 aa).

An amidoligase domain region spans residues Met-1–Leu-278. A CTP-binding site is contributed by Ser-24. Ser-24 serves as a coordination point for UTP. Residue Ser-25 to Ile-30 coordinates ATP. Tyr-65 contributes to the L-glutamine binding site. Asp-82 contacts ATP. Positions 82 and 151 each coordinate Mg(2+). CTP-binding positions include Asp-158–Glu-160, Lys-198–Gln-203, and Lys-234. UTP-binding positions include Lys-198–Gln-203 and Lys-234. Lys-250–Val-252 contacts ATP. Residues Thr-303–Ala-545 enclose the Glutamine amidotransferase type-1 domain. Gly-363 is a binding site for L-glutamine. Cys-390 (nucleophile; for glutamine hydrolysis) is an active-site residue. Residues Leu-391–Gln-394, Glu-414, and Arg-471 contribute to the L-glutamine site. Active-site residues include His-518 and Glu-520. The tract at residues Gln-542–Lys-563 is disordered.

This sequence belongs to the CTP synthase family. In terms of assembly, homotetramer.

The enzyme catalyses UTP + L-glutamine + ATP + H2O = CTP + L-glutamate + ADP + phosphate + 2 H(+). The catalysed reaction is L-glutamine + H2O = L-glutamate + NH4(+). It carries out the reaction UTP + NH4(+) + ATP = CTP + ADP + phosphate + 2 H(+). It functions in the pathway pyrimidine metabolism; CTP biosynthesis via de novo pathway; CTP from UDP: step 2/2. With respect to regulation, allosterically activated by GTP, when glutamine is the substrate; GTP has no effect on the reaction when ammonia is the substrate. The allosteric effector GTP functions by stabilizing the protein conformation that binds the tetrahedral intermediate(s) formed during glutamine hydrolysis. Inhibited by the product CTP, via allosteric rather than competitive inhibition. Functionally, catalyzes the ATP-dependent amination of UTP to CTP with either L-glutamine or ammonia as the source of nitrogen. Regulates intracellular CTP levels through interactions with the four ribonucleotide triphosphates. This is CTP synthase from Fibrobacter succinogenes (strain ATCC 19169 / S85).